The primary structure comprises 504 residues: MFS antiporter QDR2 (504 aa).

Over residues 1 to 14 (MLSTTQSVTEPTEV) the composition is skewed to polar residues. The tract at residues 1–23 (MLSTTQSVTEPTEVTSKKVEDIE) is disordered. Topologically, residues 1–41 (MLSTTQSVTEPTEVTSKKVEDIEKENDEETPYSIFTSYDRL) are cytoplasmic. Residues 42-62 (VLIVILSLIGFWSTISSPIYF) traverse the membrane as a helical segment. Residues 63–75 (PALPTLTSYFHTS) are Extracellular-facing. Residues 76–96 (SSIMNISVVAYLIFQGIAPTI) form a helical membrane-spanning segment. The Cytoplasmic portion of the chain corresponds to 97-106 (SSNLADTFGR). The chain crosses the membrane as a helical span at residues 107 to 129 (RPVILASIIVFCASCVAISQTNV). At 130-132 (YWL) the chain is on the extracellular side. Residues 133–155 (LAVLRCIQAAGIAAVISISSGVA) form a helical membrane-spanning segment. The Cytoplasmic portion of the chain corresponds to 156–169 (GDVCTRANRGSMVG). Residues 170 to 190 (AVAGLQLVGNGIGGLVGAALI) traverse the membrane as a helical segment. The Extracellular portion of the chain corresponds to 191–198 (SSFNSWRS). A helical membrane pass occupies residues 199–219 (IFIFLTIGGGVTFILAIFILP). Residues 220–278 (ETSRKLVGNGSVVPKNILNKSPYIYLPHFKKRMNNDITTIVPATRFDLLGPLKIFFQKN) are Cytoplasmic-facing. The chain crosses the membrane as a helical span at residues 279 to 299 (VFCTLLPVGIHFAAWTMVLTS). Topologically, residues 300-311 (LSTELESRYHYS) are extracellular. Residues 312–332 (VMHVGLIYLPQGIACIAGSLV) form a helical membrane-spanning segment. Residues 333-370 (VGKSLDWYYRYRKTIYDQEVECLPLDERPQFNIVATRL) are Cytoplasmic-facing. A helical transmembrane segment spans residues 371-391 (TLSVVPALLMIIGLVIFGWCI). The Extracellular segment spans residues 392 to 396 (QYKRH). Residues 397 to 417 (IISIIISTILVSFSASVFIAI) form a helical membrane-spanning segment. Residues 418-438 (CTTMLVDLYPNNGSGSTSCLN) are Cytoplasmic-facing. A helical transmembrane segment spans residues 439 to 456 (LMRCWLAALGAGVLDSMI). Over 457–460 (NAMN) the chain is Extracellular. The chain crosses the membrane as a helical span at residues 461-483 (VGGTYTVVAGFCILFDLALIYVL). Residues 484–504 (HNAKKKFSNSGPTTTKSPPKQ) lie on the Cytoplasmic side of the membrane.

The protein belongs to the major facilitator superfamily. CAR1 family.

Its subcellular location is the cell membrane. Functionally, MFS antiporter that does not display functional linkage as drug transporter and performs functions that significantly affect biofilm development and virulence. No substrate for transport has been identified yet, but plays an important role in the growth in the host. This chain is MFS antiporter QDR2 (QDR2), found in Candida albicans (strain SC5314 / ATCC MYA-2876) (Yeast).